The following is a 102-amino-acid chain: NADH-quinone oxidoreductase subunit K (102 aa).

3 consecutive transmembrane segments (helical) span residues L5–L25, I31–F51, and V62–L82.

Belongs to the complex I subunit 4L family. NDH-1 is composed of 14 different subunits. Subunits NuoA, H, J, K, L, M, N constitute the membrane sector of the complex.

Its subcellular location is the cell inner membrane. It carries out the reaction a quinone + NADH + 5 H(+)(in) = a quinol + NAD(+) + 4 H(+)(out). Its function is as follows. NDH-1 shuttles electrons from NADH, via FMN and iron-sulfur (Fe-S) centers, to quinones in the respiratory chain. The immediate electron acceptor for the enzyme in this species is believed to be ubiquinone. Couples the redox reaction to proton translocation (for every two electrons transferred, four hydrogen ions are translocated across the cytoplasmic membrane), and thus conserves the redox energy in a proton gradient. The protein is NADH-quinone oxidoreductase subunit K of Bordetella parapertussis (strain 12822 / ATCC BAA-587 / NCTC 13253).